The chain runs to 237 residues: ADTIVAVELDSYPNTDIGDPNYPHIGIDIKSIRSKSTARWNMQTGKVGTVHISYNSVAKRLSAVVSYSGSSSTTVSYDVDLNNVLPEWVRVGLSATTGLYKETNTILSWSFTSKLKTNSIADENSLHFSFHKFSQNPKDLILQGDAFTDSDGNLELTKVSNSGDPQGNSVGRALFYAPVHIWEKSAVVASFDATFTFLIKSPDREPADGITFFIANTDTSIPSGSGGRLLGLFPDAN.

Glu-8 and Asp-10 together coordinate Mn(2+). Asp-10, Tyr-12, Asn-14, and Asp-19 together coordinate Ca(2+). Tyr-12 is a binding site for a carbohydrate. Residues Asp-19 and His-24 each coordinate Mn(2+). Position 99-100 (99-100 (LY)) interacts with a carbohydrate. Residue Asp-208 participates in Ca(2+) binding. Arg-228 provides a ligand contact to a carbohydrate.

Belongs to the leguminous lectin family. Homotetramer. In terms of processing, the beta and gamma chains are produced by partial proteolytic processing of the lectin alpha chain by an asparaginyl endopeptidase.

The protein resides in the vacuole. The protein localises to the aleurone grain. Functionally, D-mannose/D-glucose-binding lectin with hemagglutinating activity towards rabbit and human erythrocytes. In rats, elicits an acute inflammatory response by inducing neutrophil migration and induces dose-dependent paw edema. This Macropsychanthus wilsonii (Wilson's clusterpea) protein is Lectin alpha chain.